We begin with the raw amino-acid sequence, 391 residues long: CBS domain-containing protein CBSX5 (391 aa).

2 CBS domains span residues 16–81 (GKPP…DHDH) and 331–391 (MARK…ENDM).

This is CBS domain-containing protein CBSX5 (CBSX5) from Arabidopsis thaliana (Mouse-ear cress).